The chain runs to 168 residues: CASP-like protein UU-1 (168 aa).

Topologically, residues 1 to 17 (MVELESQEAVTVASTAD) are cytoplasmic. A helical membrane pass occupies residues 18–38 (IAVDVSLRLLAAATSLAAAVV). At 39–54 (VAANHQQRWGIRVDFT) the chain is on the extracellular side. The helical transmembrane segment at 55 to 75 (LFQVWIGFVAVNLVCTVYAAA) threads the bilayer. Residues 76-95 (TAAAAARKAMGRWWLHHADA) lie on the Cytoplasmic side of the membrane. A helical membrane pass occupies residues 96–116 (VVVNLEAAATAGAGAIGSIAM). Over 117–136 (WGNEASGWYAVCRLYRRYCN) the chain is Extracellular. Residues 137-157 (AGAAALALSLAAVLLLGVACA) form a helical membrane-spanning segment. Over 158–168 (RSRYPKMPPTT) the chain is Cytoplasmic.

Belongs to the Casparian strip membrane proteins (CASP) family. As to quaternary structure, homodimer and heterodimers.

Its subcellular location is the cell membrane. The chain is CASP-like protein UU-1 from Oryza sativa subsp. japonica (Rice).